We begin with the raw amino-acid sequence, 70 residues long: Cytoinsectotoxin-2c (70 aa).

It belongs to the cationic peptide 06 (cytoinsectotoxin) family. Expressed by the venom gland.

It is found in the secreted. Its function is as follows. Insecticidal and antimicrobial peptide. Has insecticidal activity against larvae of flesh fly S.carnaria. Has antibacterial activity against Gram-positive bacterium B.subtilis B-501 (MIC=1.25 uM) and Gram-negative bacterium E.coli DH5alpha (MIC=2.5 uM). The protein is Cytoinsectotoxin-2c of Lachesana tarabaevi (Spider).